The following is an 895-amino-acid chain: MAQYTPMIQQYLKVKADYKDAFLFFRLGDFYEMFFEDAVKAAHELEITLTSRDGGSSERIPMCGVPYHAAQNYIEQLIEKGYKVAICEQVEDPKTAKGVVRREVVQLITPGTMMEGRTIDEKENNFLAALTRFEDGSYALACNDLTTGQNTVTLLTGSVEDVLLEVYATGSKEIVVDSTFSQDELNKLTETLKMTVSYEEETKIPEGLEPLVKKVTQTKLVTAVGRLFNYVLRTQKRSLDHLQPVEIYYTNQFMKIDVHSKRNLELTETLRTKEKTGSLLWLLDKTKTAMGGRMLKQWMERPLIQKEKIEERLEMVETFVNDYFLREDLKEKLKEVYDLERLAGKVAYGSVNARDLLQLKRSLQQVPAILEAISLLDNSYAAKLIEGADPCEALTKLLDRSIQENPPLSVKDGDIIKDGYNEKLDEYRYISKNGKTWIAELEKREREITGIKSLKIGYNRIFGYYIEVTKANLSLLPEGRYERKQTLANAERFITDELKEKETLILEAEEKIVQLEYDLFTALREEVKVFIPKLQHLAKVISELDVLQSFATVSEEERFVKPVLTNKREIFIKDGRHPVVEKVLDGKLYVPNDCMMPENMDVFLITGPNMSGKSTYMRQLALVTIMAQIGCFVPATEAILPVFDQIFTRIGAADDLISGQSTFMVEMLEAKNAIANASERSLILFDEIGRGTSTYDGMALAQAIIEHIHDQIGAKTLFSTHYHELTVLEESLTHLKNVHVSAIEEDGKVVFLHKIQEGAADKSYGIHVAQLAELPDSLIARAKEVLAQLEGQEEITIPKRTEVKEQPERMQQPVIEEQPVIKEVAEVQQESEEIVEESQLSFFETEERMEKQEKPVLDAKETAVLAQIKKIDLLDMTPLEALNELYRLQKKLKKG.

607 to 614 (GPNMSGKS) is an ATP binding site.

Belongs to the DNA mismatch repair MutS family.

Its function is as follows. This protein is involved in the repair of mismatches in DNA. It is possible that it carries out the mismatch recognition step. This protein has a weak ATPase activity. In Bacillus cytotoxicus (strain DSM 22905 / CIP 110041 / 391-98 / NVH 391-98), this protein is DNA mismatch repair protein MutS.